A 719-amino-acid chain; its full sequence is MHRNLGDKDLNLPQYYNNRELSWLDFNYRVLQEAQDKNNPLLEQLNFISIFSSNLDEFFMVRVAGLQDQVKMGYDKPENKAQLTPKQQLVQIKLKNKEIVDLQYKRYNELIDDLKQYQVEIIKPEQLPDDLLPQLESEFKYGILPTLTPLGIDAYHPFPKLNNKSLNIFVDIDTEDDINSAIVQIPSLISRFYSFNKGDKQYIILIEDIITYFINDLFSGYTVLNTFTFRITRNADLTIHEDGAEDLLIEIERFLKERKRGTAVRLEVDGRQATHEDIVWIINQLDVHDNDVYFVDGPLDLTMLTDLVDHLSNKLKYLKYNKYVPQIPQSLGNHNIFDLSLKRDIFFHHPYESFEPIVDFIREAAEDPNTIAIKQTLYRVSKDSPIINSLKNAAENGKQVTVLVELKARFDEENNVHWARMLEEAGCHVIYGMTHLKTHSKIALVVKRMNNKLTSFIHLGTGNYNDKTANIYTDMGLITTNAEIAEDAINFFNYLSGYSVKPEYNKLIVAPFDIRDVFLARIDNEIKSHRENGNGKIIMKMNSLTDKDIILKLFEASCAGVKVQLIIRGICCLKPGVPGISENIEVVSIVGRFLEHSRIYHFHNNGDDIIYLSSADAMTRNMIKRVEILFPVEDKNIAKRLLDYMNLQLSDNQKGRYQDELGQYHYIENNLSPLNSQAFLMKEAMDYGQQLKEDNTRPQVMSVNERKGWFTKIRKQFRK.

Asparagine 54 is a binding site for ATP. 2 residues coordinate Mg(2+): arginine 379 and arginine 409. Positions 434–468 (THLKTHSKIALVVKRMNNKLTSFIHLGTGNYNDKT) constitute a PLD phosphodiesterase domain. The Phosphohistidine intermediate role is filled by histidine 439. Tyrosine 472, arginine 568, and histidine 596 together coordinate ATP.

The protein belongs to the polyphosphate kinase 1 (PPK1) family. It depends on Mg(2+) as a cofactor. An intermediate of this reaction is the autophosphorylated ppk in which a phosphate is covalently linked to a histidine residue through a N-P bond.

The catalysed reaction is [phosphate](n) + ATP = [phosphate](n+1) + ADP. Functionally, catalyzes the reversible transfer of the terminal phosphate of ATP to form a long-chain polyphosphate (polyP). This chain is Polyphosphate kinase, found in Staphylococcus saprophyticus subsp. saprophyticus (strain ATCC 15305 / DSM 20229 / NCIMB 8711 / NCTC 7292 / S-41).